The sequence spans 415 residues: Queuine tRNA-ribosyltransferase accessory subunit 2 (415 aa).

Residues Cys351, Cys353, Cys356, and His382 each coordinate Zn(2+).

This sequence belongs to the queuine tRNA-ribosyltransferase family. QTRT2 subfamily. As to quaternary structure, heterodimer of a catalytic subunit qtrt1 and an accessory subunit qtrt2. Zn(2+) serves as cofactor.

The protein resides in the cytoplasm. The protein localises to the mitochondrion outer membrane. Non-catalytic subunit of the queuine tRNA-ribosyltransferase (TGT) that catalyzes the base-exchange of a guanine (G) residue with queuine (Q) at position 34 (anticodon wobble position) in tRNAs with GU(N) anticodons (tRNA-Asp, -Asn, -His and -Tyr), resulting in the hypermodified nucleoside queuosine (7-(((4,5-cis-dihydroxy-2-cyclopenten-1-yl)amino)methyl)-7-deazaguanosine). The polypeptide is Queuine tRNA-ribosyltransferase accessory subunit 2 (Xenopus laevis (African clawed frog)).